Reading from the N-terminus, the 377-residue chain is DNA-directed RNA polymerase subunit alpha (377 aa).

Positions 1–259 (MSDSSHNLLY…KHFSVFEKMD (259 aa)) are alpha N-terminal domain (alpha-NTD). The alpha C-terminal domain (alpha-CTD) stretch occupies residues 276-377 (KDDILHKLVL…KIRLSKNTKG (102 aa)).

Belongs to the RNA polymerase alpha chain family. Homodimer. The RNAP catalytic core consists of 2 alpha, 1 beta, 1 beta' and 1 omega subunit. When a sigma factor is associated with the core the holoenzyme is formed, which can initiate transcription.

The enzyme catalyses RNA(n) + a ribonucleoside 5'-triphosphate = RNA(n+1) + diphosphate. In terms of biological role, DNA-dependent RNA polymerase catalyzes the transcription of DNA into RNA using the four ribonucleoside triphosphates as substrates. This is DNA-directed RNA polymerase subunit alpha from Chlamydia trachomatis serovar A (strain ATCC VR-571B / DSM 19440 / HAR-13).